We begin with the raw amino-acid sequence, 275 residues long: DNA repair protein RecO (275 aa).

The interval 1–38 (MTDEADADPQPFAAPPATGAPAADKPARKPRRAAPRTS) is disordered. The span at 8–24 (DPQPFAAPPATGAPAAD) shows a compositional bias: low complexity.

Belongs to the RecO family.

Its function is as follows. Involved in DNA repair and RecF pathway recombination. This Burkholderia pseudomallei (strain 1710b) protein is DNA repair protein RecO.